The primary structure comprises 366 residues: Patr class I histocompatibility antigen, C alpha chain (366 aa).

Residues 1-24 (MRVTAPRTLLLLLSGGLALTETWA) form the signal peptide. Positions 25–114 (GSHSLRYFDT…LRGYYNQSED (90 aa)) are alpha-1. The Extracellular portion of the chain corresponds to 25-308 (GSHSLRYFDT…KPTSQPTIPI (284 aa)). N-linked (GlcNAc...) asparagine glycosylation occurs at asparagine 110. The alpha-2 stretch occupies residues 115–206 (GSHTLQWMYG…ENGKETLQRT (92 aa)). 2 disulfides stabilise this stretch: cysteine 125–cysteine 192 and cysteine 227–cysteine 283. Residues 207–298 (ECPKTHMTHH…GLPEPLTLRW (92 aa)) form an alpha-3 region. In terms of domain architecture, Ig-like C1-type spans 209-297 (PKTHMTHHPV…EGLPEPLTLR (89 aa)). Residues 299 to 308 (KPTSQPTIPI) are connecting peptide. Residues 309–332 (VGIVAGLAVLAVLAVLGAVVTAMM) form a helical membrane-spanning segment. Topologically, residues 333-366 (CRRKSSGGKGGSCSQAACSNSAQGSDESLIACKA) are cytoplasmic. Phosphoserine is present on residues serine 357 and serine 360.

Belongs to the MHC class I family. Heterodimer of an alpha chain and a beta chain (beta-2-microglobulin).

It localises to the membrane. In terms of biological role, involved in the presentation of foreign antigens to the immune system. This is Patr class I histocompatibility antigen, C alpha chain from Pan troglodytes (Chimpanzee).